The chain runs to 513 residues: Probable helicase MJ1565 (513 aa).

ATP-binding positions include Arg-151, 160-165 (GMGKSN), and 467-468 (KV).

Belongs to the HerA family.

The catalysed reaction is Couples ATP hydrolysis with the unwinding of duplex DNA at the replication fork by translocating in the 5'-3' direction. This creates two antiparallel DNA single strands (ssDNA). The leading ssDNA polymer is the template for DNA polymerase III holoenzyme which synthesizes a continuous strand.. It catalyses the reaction ATP + H2O = ADP + phosphate + H(+). It carries out the reaction Couples ATP hydrolysis with the unwinding of duplex DNA by translocating in the 3'-5' direction.. In terms of biological role, a probably bidirectional DNA helicase. The chain is Probable helicase MJ1565 from Methanocaldococcus jannaschii (strain ATCC 43067 / DSM 2661 / JAL-1 / JCM 10045 / NBRC 100440) (Methanococcus jannaschii).